The chain runs to 678 residues: MAAPGPLPAAALSPGAPTPRELMHGVAGVTSRAGRDREAGSVLPAGNRGARKASRRSSSRSMSRDNKFSKKDCLSIRNVVASIQTKEGLNLKLISGDVLYIWADVIVNSVPMNLQLGGGPLSRAFLQKAGPMLQKELDDRRRETEEKVGNIFMTSGCNLDCKAVLHAVAPYWNNGAETSWQIMANIIKKCLTTVEVLSFSSITFPMIGTGSLQFPKAVFAKLILSEVFEYSSSTRPITSPLQEVHFLVYTNDDEGCQAFLDEFTNWSRINPNKARIPMAGDTQGVVGTVSKPCFTAYEMKIGAITFQVATGDIATEQVDVIVNSTARTFNRKSGVSRAILEGAGQAVESECAVLAAQPHRDFIITPGGCLKCKIIIHVPGGKDVRKTVTSVLEECEQRKYTSVSLPAIGTGNAGKNPITVADNIIDAIVDFSSQHSTPSLKTVKVVIFQPELLNIFYDSMKKRDLSASLNFQSTFSMTTCNLPEHWTDMNHQLFCMVQLEPGQSEYNTIKDKFTRTCSSYAIEKIERIQNAFLWQSYQVKKRQMDIKNDHKNNERLLFHGTDADSVPYVNQHGFNRSCAGKNAVSYGKGTYFAVDASYSAKDTYSKPDSNGRKHMYVVRVLTGVFTKGRAGLVTPPPKNPHNPTDLFDSVTNNTRSPKLFVVFFDNQAYPEYLITFTA.

Over residues 1 to 19 the composition is skewed to low complexity; that stretch reads MAAPGPLPAAALSPGAPTP. Residues 1-67 form a disordered region; sequence MAAPGPLPAA…SSRSMSRDNK (67 aa). The span at 49–58 shows a compositional bias: basic residues; that stretch reads GARKASRRSS. Macro domains follow at residues 78 to 267 and 293 to 464; these read NVVA…TNWS and CFTA…KKRD. Residues 312-313, 324-325, Arg-331, Val-335, 409-413, and Gln-449 contribute to the substrate site; these read DI, ST, and GTGNA. In terms of domain architecture, PARP catalytic spans 482–678; it reads LPEHWTDMNH…YPEYLITFTA (197 aa).

The protein belongs to the ARTD/PARP family.

The protein resides in the nucleus. It catalyses the reaction L-aspartyl-[protein] + NAD(+) = 4-O-(ADP-D-ribosyl)-L-aspartyl-[protein] + nicotinamide. It carries out the reaction L-glutamyl-[protein] + NAD(+) = 5-O-(ADP-D-ribosyl)-L-glutamyl-[protein] + nicotinamide. Its function is as follows. Mono-ADP-ribosyltransferase that mediates mono-ADP-ribosylation of target proteins. Acts as a negative regulator of transcription. The polypeptide is Protein mono-ADP-ribosyltransferase PARP15 (Homo sapiens (Human)).